We begin with the raw amino-acid sequence, 236 residues long: DDCVCPGGREWASVASKADSQEARVNRLAGRVEALAENLRAGGDRLSHYKSEFRELEFRVDELEGNGCEPRHFQCGGSAMECISDLLTCDGSPDCANGADEDSDVCHIPPIAGTLLVGHLNTDHDFCTKRKPNEFDLFISSVQRSSYFQSRLKVKGNLQIKYTAEGRDQEDVLQVKGYYNFGTHQLVILPPEDDRLGIVCNFRAGNDDRCRAHIVHEASLEHCGDDFVFVKEDDHH.

In terms of domain architecture, LDL-receptor class A spans 66–108 (NGCEPRHFQCGGSAMECISDLLTCDGSPDCANGADEDSDVCHI). Cystine bridges form between Cys-68–Cys-82, Cys-75–Cys-95, and Cys-89–Cys-106.

In terms of assembly, disulfide-linked dimer of identical chains. A model is proposed for the subunit structure of the Tylorrhynchus hemoglobin, consisting of 216 polypeptides chains, 192 heme-containing chains, and 24 linker chains.

In terms of biological role, acts as a linker for the assembly of heme-containing chains in the construction of giant hemoglobin. This is Giant extracellular hemoglobin linker 2 chain from Tylorrhynchus heterochetus (Japanese palolo worm).